The following is a 315-amino-acid chain: DNA-directed RNA polymerase subunit alpha (315 aa).

The alpha N-terminal domain (alpha-NTD) stretch occupies residues 1-229 (MLDSKLKAPV…EHLTYFSNPQ (229 aa)). The alpha C-terminal domain (alpha-CTD) stretch occupies residues 247–315 (EQEEELDLPL…LEKKGFTLKE (69 aa)).

It belongs to the RNA polymerase alpha chain family. Homodimer. The RNAP catalytic core consists of 2 alpha, 1 beta, 1 beta' and 1 omega subunit. When a sigma factor is associated with the core the holoenzyme is formed, which can initiate transcription.

It catalyses the reaction RNA(n) + a ribonucleoside 5'-triphosphate = RNA(n+1) + diphosphate. Functionally, DNA-dependent RNA polymerase catalyzes the transcription of DNA into RNA using the four ribonucleoside triphosphates as substrates. The sequence is that of DNA-directed RNA polymerase subunit alpha from Thermus thermophilus (strain ATCC BAA-163 / DSM 7039 / HB27).